The primary structure comprises 253 residues: ER membrane protein complex subunit 3 (253 aa).

3 helical membrane-spanning segments follow: residues 10-30, 126-146, and 176-196; these read WVLLPISIVMVLTGVLKQYIM, FIPQTIIMWWVNHFFAGFILM, and SISWYFISVLGLNPVYNLIGL.

Belongs to the EMC3 family. In terms of assembly, component of the ER membrane protein complex (EMC), which is composed of EMC1, EMC2, EMC3, EMC4, EMC5 and EMC6.

It localises to the endoplasmic reticulum membrane. Its function is as follows. The EMC seems to be required for efficient folding of proteins in the endoplasmic reticulum (ER). This is ER membrane protein complex subunit 3 (AIM27) from Saccharomyces cerevisiae (strain YJM789) (Baker's yeast).